We begin with the raw amino-acid sequence, 119 residues long: uncharacterized protein (119 aa).

The interval 55–119 (LSTEPPTPPS…SRLPPRSWTN (65 aa)) is disordered. The segment covering 81-92 (LSYTRCHSTTYT) has biased composition (polar residues).

This is an uncharacterized protein from Saccharomyces cerevisiae (strain ATCC 204508 / S288c) (Baker's yeast).